The primary structure comprises 421 residues: MIVTLPARSGIELSVTTPPSKSYTHRALIAAALAQGRSTIVRPLMADDTKLTIASLMKLGVAIHADQHNIMLEGCDGSFPNTPGTVLDLDNSGTSLRLLASAALLATYPVTLTGSARMQERPLGPLAHTLNDLGGMVIFTKKEGYPPVTIGGRLLGGTATIDGSQSSQFASSVMMAAPYSKGPVDLTVTGTPASQSYLDITAGVMTDFGAVIRREGYRRFLVSNCNHYTGRTFVVEGDYSSASYFFALAAICGGKVTVAGLAPDSVQGDRLFLDALQRMGCEVTYAHDGVTVENQGPLTGITINMSSAPDTVQTLCMVAAVARTPTIITGIGHLKFKESDRIAVTADRLRMLGGIVTAERDRIVIQPATLHGGRIDPVNDHRTAMSFAVLGLGIGGITITGAECVNKSFPGFWEILSKVME.

Positions 21, 22, and 26 each coordinate 3-phosphoshikimate. Residue K21 coordinates phosphoenolpyruvate. Positions 93 and 121 each coordinate phosphoenolpyruvate. Positions 166, 167, 168, 194, 310, and 337 each coordinate 3-phosphoshikimate. Q168 contacts phosphoenolpyruvate. D310 (proton acceptor) is an active-site residue. 3 residues coordinate phosphoenolpyruvate: R341, R382, and K407.

The protein belongs to the EPSP synthase family. In terms of assembly, monomer.

It localises to the cytoplasm. It catalyses the reaction 3-phosphoshikimate + phosphoenolpyruvate = 5-O-(1-carboxyvinyl)-3-phosphoshikimate + phosphate. It participates in metabolic intermediate biosynthesis; chorismate biosynthesis. Functionally, catalyzes the transfer of the enolpyruvyl moiety of phosphoenolpyruvate (PEP) to the 5-hydroxyl of shikimate-3-phosphate (S3P) to produce enolpyruvyl shikimate-3-phosphate and inorganic phosphate. This is 3-phosphoshikimate 1-carboxyvinyltransferase from Methanoregula boonei (strain DSM 21154 / JCM 14090 / 6A8).